The primary structure comprises 234 residues: Opacity protein opA51 (234 aa).

Residue alanine 1 is a signal peptide.

It belongs to the opacity porin family.

The protein localises to the cell outer membrane. In terms of biological role, implicated in a number of adherence functions. OPA proteins are implicated in pathogenesis and are subject to phase variation. In Neisseria gonorrhoeae, this protein is Opacity protein opA51 (opaB).